The sequence spans 405 residues: MIQWFLKYRPRSLKDVENQDGAKKELQEWIESWLNGKPNAKAVLLHGPPGVGKTTLAEALAHDYNLELLEMNASDSRKLQDIKSVAEKASVYGSIFGTRGKLILLDEVDGINVREDTGAIQGILELIEKTKYPIIMTANDPWNPALRELRNKTKMVGLNKLGKYPLRRLLKKICQAEKIICDDEALNYIIDTSEGDARYAINMLQGIGEGYGKVTLDLVEAMARRKERELDPFETLRDIFWARYAWQAKNAATSAQIDYDMLIRWISENIPIQYDNIEDVWRAFDALSRASIFLKRAKGGDWDLLSYAYDLMSSGVAAAEIEKKKPNWKPKWKKYQFPSYIQLLSKSKDIRDTRDEIIKKLAIHSSFNKTLNDTYPFFLIFYKKYDKRLSLNTKEKEYLNSASKS.

ATP is bound at residue 47–54 (GPPGVGKT).

Belongs to the activator 1 small subunits family. RfcL subfamily. In terms of assembly, heteromultimer composed of small subunits (RfcS) and large subunits (RfcL).

Part of the RFC clamp loader complex which loads the PCNA sliding clamp onto DNA. The protein is Replication factor C large subunit of Saccharolobus islandicus (strain M.16.4 / Kamchatka #3) (Sulfolobus islandicus).